The primary structure comprises 93 residues: MFCVIYRSTKREQTYLYVEKKDDFSRVPDELMRSFGTPQMAMLLPLDGRKKLVNADLEKVKQALSEQGYYLQLPPPSENLLKKHLAEQGKQSD.

Residues Met1–Leu85 enclose the YcgL domain.

The protein is YcgL domain-containing protein KPN78578_22820 of Klebsiella pneumoniae subsp. pneumoniae (strain ATCC 700721 / MGH 78578).